The chain runs to 496 residues: Probable CtpA-like serine protease (496 aa).

The segment covering 1 to 16 has biased composition (basic and acidic residues); sequence MDDKQHTTSSDDERAE. Residues 1-27 are disordered; that stretch reads MDDKQHTTSSDDERAENATSNQDQQTN. Positions 17-27 are enriched in polar residues; that stretch reads NATSNQDQQTN. Residues 39–59 traverse the membrane as a helical segment; that stretch reads FISILIGTIIITAVITVVAYI. Residues 124 to 206 form the PDZ domain; that stretch reads TKSFNEGVSG…TEVTLTVQRG (83 aa). Active-site charge relay system residues include serine 329, aspartate 340, and lysine 354.

This sequence belongs to the peptidase S41A family.

The protein resides in the cell membrane. In Staphylococcus aureus (strain MRSA252), this protein is Probable CtpA-like serine protease.